The chain runs to 369 residues: 2-aminoethylphosphonate--pyruvate transaminase (369 aa).

At lysine 193 the chain carries N6-(pyridoxal phosphate)lysine.

This sequence belongs to the class-V pyridoxal-phosphate-dependent aminotransferase family. PhnW subfamily. As to quaternary structure, homodimer. It depends on pyridoxal 5'-phosphate as a cofactor.

It catalyses the reaction (2-aminoethyl)phosphonate + pyruvate = phosphonoacetaldehyde + L-alanine. Involved in phosphonate degradation. The polypeptide is 2-aminoethylphosphonate--pyruvate transaminase (Burkholderia pseudomallei (strain 1106a)).